We begin with the raw amino-acid sequence, 466 residues long: Trigger factor (466 aa).

In terms of domain architecture, PPIase FKBP-type spans 166-245; sequence GDFAQIDLVA…LNAVKERELP (80 aa). 2 disordered regions span residues 313–332 and 424–466; these read LEQESRLEDDEHRAEVTESS and LPDD…AADK. Over residues 426–444 the composition is skewed to acidic residues; sequence DDGEAVDEDATPEDTDAPA. Positions 453–466 are enriched in basic residues; that stretch reads PKKKAAAKKKAADK.

Belongs to the FKBP-type PPIase family. Tig subfamily.

Its subcellular location is the cytoplasm. It carries out the reaction [protein]-peptidylproline (omega=180) = [protein]-peptidylproline (omega=0). In terms of biological role, involved in protein export. Acts as a chaperone by maintaining the newly synthesized protein in an open conformation. Functions as a peptidyl-prolyl cis-trans isomerase. This chain is Trigger factor, found in Leifsonia xyli subsp. xyli (strain CTCB07).